The chain runs to 302 residues: Methionyl-tRNA formyltransferase (302 aa).

Position 108-111 (108-111 (SLLP)) interacts with (6S)-5,6,7,8-tetrahydrofolate.

It belongs to the Fmt family.

The catalysed reaction is L-methionyl-tRNA(fMet) + (6R)-10-formyltetrahydrofolate = N-formyl-L-methionyl-tRNA(fMet) + (6S)-5,6,7,8-tetrahydrofolate + H(+). Attaches a formyl group to the free amino group of methionyl-tRNA(fMet). The formyl group appears to play a dual role in the initiator identity of N-formylmethionyl-tRNA by promoting its recognition by IF2 and preventing the misappropriation of this tRNA by the elongation apparatus. The protein is Methionyl-tRNA formyltransferase of Nitratiruptor sp. (strain SB155-2).